Here is a 402-residue protein sequence, read N- to C-terminus: UPF0261 protein BPP1817 (402 aa).

The protein belongs to the UPF0261 family.

The sequence is that of UPF0261 protein BPP1817 from Bordetella parapertussis (strain 12822 / ATCC BAA-587 / NCTC 13253).